The primary structure comprises 510 residues: Probable mannosyl-oligosaccharide alpha-1,2-mannosidase 1B (510 aa).

The N-terminal stretch at 1–21 (MHFSSLSLPLTALSLVTPSLA) is a signal peptide. N-linked (GlcNAc...) asparagine glycosylation is found at Asn35, Asn95, Asn182, and Asn249. Cys332 and Cys361 are oxidised to a cystine. An N-linked (GlcNAc...) asparagine glycan is attached at Asn366. Residue Glu375 is the Proton donor of the active site. Thr501 provides a ligand contact to Ca(2+).

The protein belongs to the glycosyl hydrolase 47 family. As to quaternary structure, monomer. It depends on Ca(2+) as a cofactor. Requires Mg(2+) as cofactor.

The protein localises to the cytoplasmic vesicle lumen. The enzyme catalyses N(4)-(alpha-D-Man-(1-&gt;2)-alpha-D-Man-(1-&gt;2)-alpha-D-Man-(1-&gt;3)-[alpha-D-Man-(1-&gt;2)-alpha-D-Man-(1-&gt;3)-[alpha-D-Man-(1-&gt;2)-alpha-D-Man-(1-&gt;6)]-alpha-D-Man-(1-&gt;6)]-beta-D-Man-(1-&gt;4)-beta-D-GlcNAc-(1-&gt;4)-beta-D-GlcNAc)-L-asparaginyl-[protein] (N-glucan mannose isomer 9A1,2,3B1,2,3) + 4 H2O = N(4)-(alpha-D-Man-(1-&gt;3)-[alpha-D-Man-(1-&gt;3)-[alpha-D-Man-(1-&gt;6)]-alpha-D-Man-(1-&gt;6)]-beta-D-Man-(1-&gt;4)-beta-D-GlcNAc-(1-&gt;4)-beta-D-GlcNAc)-L-asparaginyl-[protein] (N-glucan mannose isomer 5A1,2) + 4 beta-D-mannose. The catalysed reaction is N(4)-(alpha-D-Man-(1-&gt;2)-alpha-D-Man-(1-&gt;2)-alpha-D-Man-(1-&gt;3)-[alpha-D-Man-(1-&gt;3)-[alpha-D-Man-(1-&gt;2)-alpha-D-Man-(1-&gt;6)]-alpha-D-Man-(1-&gt;6)]-beta-D-Man-(1-&gt;4)-beta-D-GlcNAc-(1-&gt;4)-beta-D-GlcNAc)-L-asparaginyl-[protein] (N-glucan mannose isomer 8A1,2,3B1,3) + 3 H2O = N(4)-(alpha-D-Man-(1-&gt;3)-[alpha-D-Man-(1-&gt;3)-[alpha-D-Man-(1-&gt;6)]-alpha-D-Man-(1-&gt;6)]-beta-D-Man-(1-&gt;4)-beta-D-GlcNAc-(1-&gt;4)-beta-D-GlcNAc)-L-asparaginyl-[protein] (N-glucan mannose isomer 5A1,2) + 3 beta-D-mannose. The protein operates within protein modification; protein glycosylation. Functionally, involved in the maturation of Asn-linked oligosaccharides. Progressively trims alpha-1,2-linked mannose residues from Man(9)GlcNAc(2) to produce Man(5)GlcNAc(2). The protein is Probable mannosyl-oligosaccharide alpha-1,2-mannosidase 1B (mns1B) of Aspergillus flavus (strain ATCC 200026 / FGSC A1120 / IAM 13836 / NRRL 3357 / JCM 12722 / SRRC 167).